Reading from the N-terminus, the 326-residue chain is Isopenicillin N synthase (326 aa).

Isopenicillin N-binding residues include arginine 84, tyrosine 88, and tyrosine 186. The N-[(5S)-5-amino-5-carboxypentanoyl]-L-cysteinyl-D-valine site is built by arginine 84, tyrosine 88, tyrosine 186, histidine 209, and aspartate 211. Residues 183–283 enclose the Fe2OG dioxygenase domain; it reads LIRYPFLENY…RLSIPFFANL (101 aa). Histidine 209, aspartate 211, and histidine 265 together coordinate Fe(2+). A 2-oxoglutarate-binding site is contributed by arginine 274. An isopenicillin N-binding site is contributed by serine 276. Serine 276 lines the N-[(5S)-5-amino-5-carboxypentanoyl]-L-cysteinyl-D-valine pocket.

The protein belongs to the iron/ascorbate-dependent oxidoreductase family. The cofactor is Fe cation. It depends on L-ascorbate as a cofactor.

The catalysed reaction is N-[(5S)-5-amino-5-carboxypentanoyl]-L-cysteinyl-D-valine + O2 = isopenicillin N + 2 H2O. It participates in antibiotic biosynthesis; penicillin G biosynthesis; penicillin G from L-alpha-aminoadipate and L-cysteine and L-valine: step 2/3. Its function is as follows. Removes, in the presence of oxygen, 4 hydrogen atoms from delta-L-(alpha-aminoadipyl)-L-cysteinyl-D-valine (ACV) to form the azetidinone and thiazolidine rings of isopenicillin. This is Isopenicillin N synthase (pcbC) from Lysobacter lactamgenus.